Reading from the N-terminus, the 274-residue chain is Rhamnulose-1-phosphate aldolase (274 aa).

Glutamate 117 is a catalytic residue. Residues histidine 141, histidine 143, and histidine 212 each coordinate Zn(2+).

Belongs to the aldolase class II family. RhaD subfamily. As to quaternary structure, homotetramer. Zn(2+) serves as cofactor.

The protein resides in the cytoplasm. It catalyses the reaction L-rhamnulose 1-phosphate = (S)-lactaldehyde + dihydroxyacetone phosphate. The protein operates within carbohydrate degradation; L-rhamnose degradation; glycerone phosphate from L-rhamnose: step 3/3. Its function is as follows. Catalyzes the reversible cleavage of L-rhamnulose-1-phosphate to dihydroxyacetone phosphate (DHAP) and L-lactaldehyde. The chain is Rhamnulose-1-phosphate aldolase from Escherichia coli (strain SE11).